Here is a 252-residue protein sequence, read N- to C-terminus: Vitamin B12 import ATP-binding protein BtuD (252 aa).

The ABC transporter domain maps to 2-237 (IQIKSLSVGA…EQLESVFNTQ (236 aa)). 30-37 (GPNGSGKS) provides a ligand contact to ATP.

It belongs to the ABC transporter superfamily. Vitamin B12 importer (TC 3.A.1.13.1) family. The complex is composed of two ATP-binding proteins (BtuD), two transmembrane proteins (BtuC) and a solute-binding protein (BtuF).

It is found in the cell inner membrane. The catalysed reaction is an R-cob(III)alamin(out) + ATP + H2O = an R-cob(III)alamin(in) + ADP + phosphate + H(+). In terms of biological role, part of the ABC transporter complex BtuCDF involved in vitamin B12 import. Responsible for energy coupling to the transport system. This Vibrio atlanticus (strain LGP32) (Vibrio splendidus (strain Mel32)) protein is Vitamin B12 import ATP-binding protein BtuD.